Reading from the N-terminus, the 167-residue chain is Type IV major pilin protein PilE (167 aa).

Positions 1-7 are cleaved as a propeptide — leader sequence; it reads MNTLQKG. At phenylalanine 8 the chain carries N-methylphenylalanine. A helical transmembrane segment spans residues 8–28; it reads FTLIELMIVIAIVGILAAVAL. Residue serine 70 is glycosylated (O-linked (GlcNAc...) serine). A disulfide bridge links cysteine 127 with cysteine 160.

Belongs to the N-Me-Phe pilin family. The pili are polar flexible filaments of about 5.4 nanometers diameter and 2.5 micrometers average length; they consist of only a single polypeptide chain arranged in a helical configuration of five subunits per turn in the assembled pilus.

The protein resides in the fimbrium. It localises to the membrane. Major component of the type IV pilus (T4P) that plays a role in cellular adherence, microcolony formation, resistance to neutrophil mediated killing, twitching motility as well as transformation. Mediates the attachment and the formation of bacterial microcolonies on host epithelial cells. Mechanistically, pili retractation induces host NF-kappa-B activation in infected cells, which is temporally associated with the formation of gonococcal microcolonies. The chain is Type IV major pilin protein PilE (pilE) from Neisseria gonorrhoeae.